A 264-amino-acid chain; its full sequence is Carbohydrate deacetylase (264 aa).

The Proton acceptor role is filled by aspartate 20. Mg(2+) contacts are provided by aspartate 21, histidine 60, and histidine 127. The active-site Proton donor is histidine 215.

It belongs to the YdjC deacetylase family. In terms of assembly, homodimer. Mg(2+) serves as cofactor.

Functionally, probably catalyzes the deacetylation of acetylated carbohydrates an important step in the degradation of oligosaccharides. The polypeptide is Carbohydrate deacetylase (Thermus thermophilus (strain ATCC 27634 / DSM 579 / HB8)).